Here is a 362-residue protein sequence, read N- to C-terminus: UDP-N-acetylglucosamine--N-acetylmuramyl-(pentapeptide) pyrophosphoryl-undecaprenol N-acetylglucosamine transferase (362 aa).

UDP-N-acetyl-alpha-D-glucosamine is bound by residues 15-17 (TGG), Asn-127, Arg-165, Ser-191, Ile-247, 266-271 (ALTVSE), and Gln-292.

Belongs to the glycosyltransferase 28 family. MurG subfamily.

The protein localises to the cell inner membrane. The enzyme catalyses di-trans,octa-cis-undecaprenyl diphospho-N-acetyl-alpha-D-muramoyl-L-alanyl-D-glutamyl-meso-2,6-diaminopimeloyl-D-alanyl-D-alanine + UDP-N-acetyl-alpha-D-glucosamine = di-trans,octa-cis-undecaprenyl diphospho-[N-acetyl-alpha-D-glucosaminyl-(1-&gt;4)]-N-acetyl-alpha-D-muramoyl-L-alanyl-D-glutamyl-meso-2,6-diaminopimeloyl-D-alanyl-D-alanine + UDP + H(+). Its pathway is cell wall biogenesis; peptidoglycan biosynthesis. Functionally, cell wall formation. Catalyzes the transfer of a GlcNAc subunit on undecaprenyl-pyrophosphoryl-MurNAc-pentapeptide (lipid intermediate I) to form undecaprenyl-pyrophosphoryl-MurNAc-(pentapeptide)GlcNAc (lipid intermediate II). The sequence is that of UDP-N-acetylglucosamine--N-acetylmuramyl-(pentapeptide) pyrophosphoryl-undecaprenol N-acetylglucosamine transferase from Shewanella baltica (strain OS223).